An 877-amino-acid polypeptide reads, in one-letter code: Probable alpha/beta-glucosidase agdC (877 aa).

The first 14 residues, 1–14 (MLGSLLLLAPLAGA), serve as a signal peptide directing secretion. N-linked (GlcNAc...) asparagine glycans are attached at residues asparagine 171, asparagine 293, and asparagine 373. Aspartate 422 functions as the Nucleophile in the catalytic mechanism. Glutamate 425 is a catalytic residue. The segment at 432–476 (DPCTDPERYSSENNLPPAPPPVRSSSPRPLPGFPADFQPSSASRS) is disordered. Positions 447 to 463 (PPAPPPVRSSSPRPLPG) are enriched in pro residues. Asparagine 508 carries an N-linked (GlcNAc...) asparagine glycan. Aspartate 573 (proton donor) is an active-site residue. Residues asparagine 574, asparagine 610, and asparagine 744 are each glycosylated (N-linked (GlcNAc...) asparagine).

It belongs to the glycosyl hydrolase 31 family.

It is found in the secreted. The catalysed reaction is Hydrolysis of terminal, non-reducing (1-&gt;4)-linked alpha-D-glucose residues with release of alpha-D-glucose.. It catalyses the reaction Hydrolysis of terminal, non-reducing beta-D-glucosyl residues with release of beta-D-glucose.. In terms of biological role, glucosidase involved in the degradation of cellulosic biomass. Has both alpha- and beta-glucosidase activity. In Aspergillus oryzae (strain ATCC 42149 / RIB 40) (Yellow koji mold), this protein is Probable alpha/beta-glucosidase agdC (agdC).